The primary structure comprises 452 residues: Putrescine hydroxycinnamoyltransferase (452 aa).

Residue His-151 is the Proton acceptor of the active site. The disordered stretch occupies residues 213 to 234; sequence PAAGVDGDVGGDHKQQHGHGGE. Basic and acidic residues predominate over residues 222–234; it reads GGDHKQQHGHGGE. Asp-398 functions as the Proton acceptor in the catalytic mechanism.

This sequence belongs to the plant acyltransferase family. Highly expressed in roots. Expressed at low levels in flowers.

In terms of biological role, hydroxycinnamoyl transferase that catalyzes the transfer of an acyl from p-coumaryol-CoA to putrescine, to produce coumaroyl putrescine. Can use feruloyl-CoA, caffeoyl-CoA and sinapoyl-CoA as acyl donors. Seems to be able to transfer the acyl group from feruloyl-CoA to the acyl acceptors agmatine and spermidine. This Oryza sativa subsp. japonica (Rice) protein is Putrescine hydroxycinnamoyltransferase.